We begin with the raw amino-acid sequence, 241 residues long: Methylosome subunit pICln (241 aa).

Residues 88 to 112 are disordered; that stretch reads EDKEAHMADQEEEESEDDDDDEEPI. Residues 97 to 112 show a composition bias toward acidic residues; sequence QEEEESEDDDDDEEPI.

This sequence belongs to the pICln (TC 1.A.47) family. In terms of assembly, component of the methylosome, a 20S complex containing at least clns1a/picln, prmt5/skb1 and wdr77/mep50; may mediate snrpd1 and snrpd3 methylation. Forms a 6S pICln-Sm complex composed of clns1a/picln, snrpd1, snrpd2, snrpe, snrpf and snrpg; ring-like structure where clns1a/pICln mimics additional Sm proteins and which is unable to assemble into the core snRNP.

Its subcellular location is the cytoplasm. The protein resides in the cytosol. It is found in the nucleus. The protein localises to the cytoskeleton. Involved in both the assembly of spliceosomal snRNPs and the methylation of Sm proteins. Chaperone that regulates the assembly of spliceosomal U1, U2, U4 and U5 small nuclear ribonucleoproteins (snRNPs), the building blocks of the spliceosome, and thereby plays an important role in the splicing of cellular pre-mRNAs. Most spliceosomal snRNPs contain a common set of Sm proteins SNRPB, SNRPD1, SNRPD2, SNRPD3, SNRPE, SNRPF and SNRPG that assemble in a heptameric protein ring on the Sm site of the small nuclear RNA to form the core snRNP (Sm core). In the cytosol, the Sm proteins SNRPD1, SNRPD2, SNRPE, SNRPF and SNRPG are trapped in an inactive 6S pICln-Sm complex by the chaperone CLNS1A that controls the assembly of the core snRNP. Dissociation by the SMN complex of CLNS1A from the trapped Sm proteins and their transfer to an SMN-Sm complex triggers the assembly of core snRNPs and their transport to the nucleus. The polypeptide is Methylosome subunit pICln (clns1a) (Xenopus laevis (African clawed frog)).